A 632-amino-acid chain; its full sequence is Golgin subfamily A member 8H (632 aa).

The disordered stretch occupies residues 1 to 77 (MAEETQHNKL…SSATLKDLES (77 aa)). Coiled-coil stretches lie at residues 110-201 (VEHQ…LSSR) and 240-468 (ECAE…EKAD). Basic and acidic residues-rich tracts occupy residues 352-362 (KQEERIQEQHK) and 427-440 (HGGE…EEAP). Disordered regions lie at residues 352-379 (KQEE…EPNN), 423-452 (PGEG…DPES), and 496-524 (LSEP…DEGE). Positions 508–520 (LGGGHHQAGAQGG) are enriched in gly residues.

It belongs to the GOLGA8 family.

The polypeptide is Golgin subfamily A member 8H (GOLGA8H) (Homo sapiens (Human)).